A 458-amino-acid chain; its full sequence is Vitamin K-dependent protein C (458 aa).

Positions 1 to 27 (IPDDVGYRNQKTASKEGVCVVSKCQDG) are cleaved as a signal peptide. A propeptide spanning residues 28-36 (PNTLPRAKR) is cleaved from the precursor. In terms of domain architecture, Gla spans 37–82 (ANSFLEELRPSSLERECVEEVCDLEEAKEIFQSVDDTLAFWYKYVD). 4-carboxyglutamate is present on residues E42, E43, E50, E52, E55, E56, E61, E62, and E65. C53 and C58 are disulfide-bonded. Cystine bridges form between C86/C105, C95/C100, C99/C114, and C116/C125. 2 consecutive EGF-like domains span residues 91 to 126 (SEHPCSSQCCGHGTCADSIGGFSCQCHGGWEGSFCQ) and 130 to 170 (RFSN…LQCE). D107 carries the post-translational modification (3R)-3-hydroxyaspartate. N-linked (GlcNAc...) asparagine glycosylation is present at N133. Disulfide bonds link C134-C145, C141-C154, C156-C169, C177-C316, and C235-C251. Residues 210–447 (IDGKLTRRGD…YLDWIHSHIE (238 aa)) enclose the Peptidase S1 domain. H250 acts as the Charge relay system in catalysis. The N-linked (GlcNAc...) asparagine glycan is linked to N287. Residue D296 is the Charge relay system of the active site. N-linked (GlcNAc...) asparagine glycosylation occurs at N352. Intrachain disulfides connect C370–C384 and C395–C423. The active-site Charge relay system is the S399.

The protein belongs to the peptidase S1 family. Synthesized as a single chain precursor, which is cleaved into a light chain and a heavy chain held together by a disulfide bond. The enzyme is then activated by thrombin, which cleaves a tetradecapeptide from the amino end of the heavy chain; this reaction, which occurs at the surface of endothelial cells, is strongly promoted by thrombomodulin. In terms of processing, the vitamin K-dependent, enzymatic carboxylation of some Glu residues allows the modified protein to bind calcium. Post-translationally, the iron and 2-oxoglutarate dependent 3-hydroxylation of aspartate and asparagine is (R) stereospecific within EGF domains. As to expression, plasma; synthesized in the liver.

It is found in the secreted. Its subcellular location is the golgi apparatus. It localises to the endoplasmic reticulum. It catalyses the reaction Degradation of blood coagulation factors Va and VIIIa.. Its function is as follows. Protein C is a vitamin K-dependent serine protease that regulates blood coagulation by inactivating factors Va and VIIIa in the presence of calcium ions and phospholipids. Exerts a protective effect on the endothelial cell barrier function. The chain is Vitamin K-dependent protein C (PROC) from Oryctolagus cuniculus (Rabbit).